A 730-amino-acid polypeptide reads, in one-letter code: Procollagen-lysine,2-oxoglutarate 5-dioxygenase 1 (730 aa).

Positions 1–20 are cleaved as a signal peptide; the sequence is MVPPAVLLPWVVLPLLGVQG. Asn200, Asn403, and Asn541 each carry an N-linked (GlcNAc...) asparagine glycan. Positions 639 to 730 constitute a Fe2OG dioxygenase domain; it reads QFELAFVVRY…RYIAVSFIDP (92 aa). The Fe cation site is built by His659 and Asp661. An N-linked (GlcNAc...) asparagine glycan is attached at Asn689. His711 lines the Fe cation pocket. The active site involves Arg721.

In terms of assembly, homodimer. Requires Fe(2+) as cofactor. L-ascorbate serves as cofactor.

It is found in the rough endoplasmic reticulum membrane. It carries out the reaction L-lysyl-[collagen] + 2-oxoglutarate + O2 = (5R)-5-hydroxy-L-lysyl-[collagen] + succinate + CO2. Forms hydroxylysine residues in -Xaa-Lys-Gly- sequences in collagens. These hydroxylysines serve as sites of attachment for carbohydrate units and are essential for the stability of the intermolecular collagen cross-links. This chain is Procollagen-lysine,2-oxoglutarate 5-dioxygenase 1 (PLOD1), found in Gallus gallus (Chicken).